Consider the following 303-residue polypeptide: B1 kinase (303 aa).

Belongs to the protein kinase superfamily. Ser/Thr protein kinase family. Poxviruses subfamily. Interacts with host JIP1; this interaction increases the amount of MAPK bound to JIP1 and subsequently increases the activity of transcription factors, such as JUN, that respond to these complexes. Interacts with protein OPG198; this interaction inhibits the repressive activity of OPG198 pseudokinase on viral replication factory formation. Requires Mg(2+) as cofactor. Autophosphorylated.

It is found in the virion. It localises to the host cytoplasm. It catalyses the reaction L-seryl-[protein] + ATP = O-phospho-L-seryl-[protein] + ADP + H(+). It carries out the reaction L-threonyl-[protein] + ATP = O-phospho-L-threonyl-[protein] + ADP + H(+). In terms of biological role, essential serine/threonine-protein kinase that plays different role in the viral life cycle. Phosphorylates the host small ribosomal protein RACK1 thereby customizing the ribosomes to a state optimal for viral mRNAs (which contain poly-A leaders) but not for host mRNAs. Facilitates viral DNA replication by inhibiting host BANF1, a cellular host defense responsive to foreign DNA. Phosphorylates host BANF1 on serine and threonine residues; this leads to BANF1 relocalization to the cytoplasm, loss of dimerization and impaired DNA binding activity. Indeed, BANF1 activity depends on its DNA-binding property which is blocked by VPK1-mediated phosphorylation. Required for viral intermediate genes expression, probably by inhibiting host BANF1. Modulates cellular responses via host JUN by two different mechanisms, either by direct phosphorylation or by modulation of upstream JIP1-MAPK complexes. Seems to participate in the accumulation/processing of late proteins and thus in virion maturation. In addition, inhibits B12 repressive activity on viral DNA replication via a phosphorylation-dependent mechanism. This chain is B1 kinase (OPG187), found in Cynomys gunnisoni (Gunnison's prairie dog).